A 369-amino-acid chain; its full sequence is Anhydro-N-acetylmuramic acid kinase (369 aa).

G12–D19 is an ATP binding site.

This sequence belongs to the anhydro-N-acetylmuramic acid kinase family.

It catalyses the reaction 1,6-anhydro-N-acetyl-beta-muramate + ATP + H2O = N-acetyl-D-muramate 6-phosphate + ADP + H(+). It participates in amino-sugar metabolism; 1,6-anhydro-N-acetylmuramate degradation. It functions in the pathway cell wall biogenesis; peptidoglycan recycling. Catalyzes the specific phosphorylation of 1,6-anhydro-N-acetylmuramic acid (anhMurNAc) with the simultaneous cleavage of the 1,6-anhydro ring, generating MurNAc-6-P. Is required for the utilization of anhMurNAc either imported from the medium or derived from its own cell wall murein, and thus plays a role in cell wall recycling. In Escherichia coli O6:K15:H31 (strain 536 / UPEC), this protein is Anhydro-N-acetylmuramic acid kinase.